The sequence spans 126 residues: Fatty acid-binding protein, liver (126 aa).

An N-acetylalanine modification is found at A2.

This sequence belongs to the calycin superfamily. Fatty-acid binding protein (FABP) family. As to expression, liver.

The protein localises to the cytoplasm. Binds free fatty acids and their coenzyme A derivatives, bilirubin, and some other small molecules in the cytoplasm. May be involved in intracellular lipid transport this L-FABP binds only one fatty acid/molecule. Has more affinity for trans-parinaric acid than for cis-parinaric acid. In Rhamdia sapo (South American catfish), this protein is Fatty acid-binding protein, liver (fabp1).